A 379-amino-acid polypeptide reads, in one-letter code: UDP-4-amino-4-deoxy-L-arabinose--oxoglutarate aminotransferase (379 aa).

An N6-(pyridoxal phosphate)lysine modification is found at lysine 182.

It belongs to the DegT/DnrJ/EryC1 family. ArnB subfamily. Homodimer. The cofactor is pyridoxal 5'-phosphate.

The enzyme catalyses UDP-4-amino-4-deoxy-beta-L-arabinose + 2-oxoglutarate = UDP-beta-L-threo-pentopyranos-4-ulose + L-glutamate. Its pathway is nucleotide-sugar biosynthesis; UDP-4-deoxy-4-formamido-beta-L-arabinose biosynthesis; UDP-4-deoxy-4-formamido-beta-L-arabinose from UDP-alpha-D-glucuronate: step 2/3. The protein operates within bacterial outer membrane biogenesis; lipopolysaccharide biosynthesis. Its function is as follows. Catalyzes the conversion of UDP-4-keto-arabinose (UDP-Ara4O) to UDP-4-amino-4-deoxy-L-arabinose (UDP-L-Ara4N). The modified arabinose is attached to lipid A and is required for resistance to polymyxin and cationic antimicrobial peptides. This chain is UDP-4-amino-4-deoxy-L-arabinose--oxoglutarate aminotransferase, found in Salmonella heidelberg (strain SL476).